Consider the following 90-residue polypeptide: UPF0213 protein Reut_B5558 (90 aa).

A GIY-YIG domain is found at 5 to 80 (RQWYLYLLEC…KRMSSAQKIA (76 aa)).

The protein belongs to the UPF0213 family.

This is UPF0213 protein Reut_B5558 from Cupriavidus pinatubonensis (strain JMP 134 / LMG 1197) (Cupriavidus necator (strain JMP 134)).